Consider the following 212-residue polypeptide: Riboflavin kinase (212 aa).

Positions 1-87 are H-T-H motif-like; sequence MKKSNLDLLI…HEELSDALYR (87 aa). The interval 88–212 is riboflavin kinase; sequence GIIIGEVVSG…DGDRIRIKTL (125 aa). CDP is bound at residue 97–102; that stretch reads GIGEGA. Mg(2+)-binding residues include Thr124 and Asn126. Positions 180 and 188 each coordinate FMN. 193 to 196 contributes to the CDP binding site; that stretch reads VNLR.

It belongs to the archaeal riboflavin kinase family. Requires Mg(2+) as cofactor.

It catalyses the reaction riboflavin + CTP = CDP + FMN + H(+). It participates in cofactor biosynthesis; FMN biosynthesis; FMN from riboflavin (CTP route): step 1/1. In terms of biological role, catalyzes the CTP-dependent phosphorylation of riboflavin (vitamin B2) to form flavin mononucleotide (FMN). This is Riboflavin kinase (ribK) from Pyrococcus furiosus (strain ATCC 43587 / DSM 3638 / JCM 8422 / Vc1).